Here is a 201-residue protein sequence, read N- to C-terminus: Twist-related protein 1 (201 aa).

Residues 1-18 (MMQDVSSSPVSPADDSLS) show a composition bias toward low complexity. The segment at 1 to 106 (MMQDVSSSPV…GGGSPQSYEE (106 aa)) is disordered. The segment covering 34–43 (RGGRKRRSSR) has biased composition (basic residues). Composition is skewed to gly residues over residues 46–65 (AGGGAGPGGAAGGGVGGGDE) and 80–100 (GCGGGGGGGAGGGGSSSGGGS). A bHLH domain is found at 109–160 (TQRVMANVRERQRTQSLNEAFAALPKIIPTLPSDKLSKIQTLKLAARYIDFL). Residues 162–190 (QVLQSDELDSKMASYVAHERLSYAFSVWR) form a sufficient for transactivation activity region.

In terms of assembly, efficient DNA binding requires dimerization with another bHLH protein. Homodimer or heterodimer with E proteins such as TCF3. ID1 binds preferentially to TCF3 but does not interact efficiently with TWIST1 so ID1 levels control the amount of TCF3 available to dimerize with TWIST and thus determine the type of dimer formed.

It is found in the nucleus. Its function is as follows. Acts as a transcriptional regulator. Inhibits myogenesis by sequestrating E proteins, inhibiting trans-activation by MEF2, and inhibiting DNA-binding by MYOD1 through physical interaction. This interaction probably involves the basic domains of both proteins. Also represses expression of pro-inflammatory cytokines such as TNFA and IL1B. Regulates cranial suture patterning and fusion. Activates transcription as a heterodimer with E proteins. Regulates gene expression differentially, depending on dimer composition. Homodimers induce expression of FGFR2 and POSTN while heterodimers repress FGFR2 and POSTN expression and induce THBS1 expression. Heterodimerization is also required for osteoblast differentiation. Represses the activity of the circadian transcriptional activator: NPAS2-BMAL1 heterodimer. This chain is Twist-related protein 1 (TWIST1), found in Pan troglodytes (Chimpanzee).